Reading from the N-terminus, the 126-residue chain is MNVNNPNQMTVTPVYNGCDSGEGPQSVRGYFDAVAGENVKYDLTYLADTQGFTGVQCIYIDNAENDGAFEIDVEETGQRIKCPAGKQGYFPLLVPGRAKFVARHLGSGKKSVPLFFLNFTIAQGVW.

It is found in the virion. In association with P2 and trimeric P5, forms the spike complexes located at the 5-fold vertices of the capsid. Essential for viral infectivity. The polypeptide is Penton protein P31 (XXXI) (Acinetobacter calcoaceticus (Arthrobacter siderocapsulatus)).